Here is a 729-residue protein sequence, read N- to C-terminus: Carbon monoxide dehydrogenase/acetyl-CoA synthase subunit alpha (729 aa).

4 residues coordinate [4Fe-4S] cluster: Cys-506, Cys-509, Cys-518, and Cys-528. Cys-509 serves as a coordination point for Ni(2+). Ni(2+) is bound by residues Cys-595, Gly-596, and Cys-597.

Tetramer of two alpha and two beta chains. Ni cation is required as a cofactor. Requires [4Fe-4S] cluster as cofactor.

It carries out the reaction Co(I)-[corrinoid Fe-S protein] + acetyl-CoA + H(+) = methyl-Co(III)-[corrinoid Fe-S protein] + CO + CoA. The beta subunit generates CO from CO(2), while the alpha subunit (this protein) combines the CO with CoA and a methyl group to form acetyl-CoA. The methyl group, which is incorporated into acetyl-CoA, is transferred to the alpha subunit by a corrinoid iron-sulfur protein. The protein is Carbon monoxide dehydrogenase/acetyl-CoA synthase subunit alpha of Moorella thermoacetica (Clostridium thermoaceticum).